Consider the following 314-residue polypeptide: Synaptophysin (314 aa).

Residues 1–25 (MLLLADMDVVNQLVAGGQFRVVKEP) lie on the Cytoplasmic side of the membrane. Residues 21 to 228 (VVKEPLGFVK…NLWFVFKETG (208 aa)) form the MARVEL domain. Residues 26–49 (LGFVKVLQWVFAIFAFATCGSYTG) form a helical membrane-spanning segment. Over 50 to 107 (ELRLSVECANKTESALNIEVEFEYPFRLHQVYFDAPSCVKGGTTKIFLVGDYSSSAEF) the chain is Vesicular. N-linked (GlcNAc...) asparagine glycosylation is present at asparagine 59. Tyrosine 81 is subject to Phosphotyrosine. A helical transmembrane segment spans residues 108-131 (FVTVAVFAFLYSMGALATYIFLQN). Residues 132-138 (KYRENNK) lie on the Cytoplasmic side of the membrane. A helical transmembrane segment spans residues 139 to 162 (GPMMDFLATAVFAFMWLVSSSAWA). The Vesicular portion of the chain corresponds to 163–200 (KGLSDVKMATDPENIIKEMPMCRQTGNTCKELRDPVTS). Residues 201–224 (GLNTSVVFGFLNLVLWVGNLWFVF) traverse the membrane as a helical segment. At 225 to 314 (KETGWAAPFM…GAPTSFSNQM (90 aa)) the chain is on the cytoplasmic side. Threonine 227 carries the post-translational modification Phosphothreonine. The disordered stretch occupies residues 239 to 314 (GAPEKQPAPG…GAPTSFSNQM (76 aa)). Residues 254–264 (AGYGQGPGGYG) show a composition bias toward gly residues. Residues 255 to 305 (GYGQGPGGYGPQDSYGPQGGYQPDYGQPASGGGGGYGPQGDYGQQGYGQQG) are repeats, Gly-rich. The segment covering 265–282 (PQDSYGPQGGYQPDYGQP) has biased composition (low complexity). Phosphotyrosine occurs at positions 279 and 296. The span at 283–303 (ASGGGGGYGPQGDYGQQGYGQ) shows a compositional bias: gly residues.

This sequence belongs to the synaptophysin/synaptobrevin family. In terms of assembly, homohexamer or homotetramer. Interacts with SRCIN1. Interacts with VAMP2; the interaction is inhibited by interaction of VAPM2 with SEPT8. Ubiquitinated; mediated by SIAH1 or SIAH2 and leading to its subsequent proteasomal degradation. Post-translationally, phosphorylated by SRC.

Its subcellular location is the cytoplasmic vesicle. The protein localises to the secretory vesicle. It localises to the synaptic vesicle membrane. It is found in the synapse. The protein resides in the synaptosome. Possibly involved in structural functions as organizing other membrane components or in targeting the vesicles to the plasma membrane. Involved in the regulation of short-term and long-term synaptic plasticity. The chain is Synaptophysin (Syp) from Mus musculus (Mouse).